The following is a 251-amino-acid chain: Coproheme decarboxylase (251 aa).

Fe-coproporphyrin III is bound by residues Arg-133, 147–151 (YPMSK), His-174, Gln-187, and Ser-225. Residue Tyr-147 is part of the active site.

This sequence belongs to the ChdC family. Type 1 subfamily. Fe-coproporphyrin III is required as a cofactor.

The enzyme catalyses Fe-coproporphyrin III + 2 H2O2 + 2 H(+) = heme b + 2 CO2 + 4 H2O. It carries out the reaction Fe-coproporphyrin III + H2O2 + H(+) = harderoheme III + CO2 + 2 H2O. The catalysed reaction is harderoheme III + H2O2 + H(+) = heme b + CO2 + 2 H2O. It functions in the pathway porphyrin-containing compound metabolism; protoheme biosynthesis. Involved in coproporphyrin-dependent heme b biosynthesis. Catalyzes the decarboxylation of Fe-coproporphyrin III (coproheme) to heme b (protoheme IX), the last step of the pathway. The reaction occurs in a stepwise manner with a three-propionate intermediate. This Listeria monocytogenes serotype 4b (strain CLIP80459) protein is Coproheme decarboxylase.